Consider the following 997-residue polypeptide: Glutamate [NMDA] receptor subunit 1 (997 aa).

An N-terminal signal peptide occupies residues 1–26 (MAVAEFVFCWPLFELAIVLLVAPIHA). Residues 27-573 (AQRHTASDNP…TLVSFLQPFS (547 aa)) lie on the Extracellular side of the membrane. N-linked (GlcNAc...) asparagine glycosylation is found at N258, N314, N345, N397, N454, N481, and N501. Residues 530–532 (PLT) and R537 contribute to the glycine site. Residues 574-594 (NTLWILVMVSVHVVALVLYLL) traverse the membrane as a helical segment. Topologically, residues 595 to 651 (DRFSPFGRFKLSHSDSNEEKALNLSSAVWFAWGVLLNSGIGEGTPRSFSARVLGMVW) are cytoplasmic. Residues 652-672 (AGFAMIIVASYTANLAAFLVL) form a helical membrane-spanning segment. The Extracellular segment spans residues 673-831 (ERPKTKLSGI…KTPNTLGLKN (159 aa)). A glycan (N-linked (GlcNAc...) asparagine) is linked at N693. 2 residues coordinate glycine: S703 and D747. A helical transmembrane segment spans residues 832–852 (MAGVFILVGVGIAGGVGLIII). The Cytoplasmic portion of the chain corresponds to 853–997 (EVIYKKHQVK…YTSDVSHLVV (145 aa)). Residues 947–997 (ELGKPGQSPKVMSANQPGMPMPMLGKTRPQQSVLPPRYSPGYTSDVSHLVV) are disordered. The segment covering 987-997 (GYTSDVSHLVV) has biased composition (polar residues).

This sequence belongs to the glutamate-gated ion channel (TC 1.A.10.1) family. In terms of assembly, forms a heteromeric NMDA channel with Nmdar2.

The protein localises to the cell membrane. Its subcellular location is the postsynaptic cell membrane. It is found in the postsynaptic density. Its function is as follows. NMDA receptor subtype of glutamate-gated ion channels with high calcium permeability and voltage-dependent sensitivity to magnesium. Mediated by glycine. This protein plays a key role in synaptic plasticity, synaptogenesis, excitotoxicity, memory acquisition and learning. It mediates neuronal functions in glutamate neurotransmission. Is involved in the cell surface targeting of NMDA receptors. Plays a role in associative learning and in long-term memory consolidation. This chain is Glutamate [NMDA] receptor subunit 1, found in Drosophila erecta (Fruit fly).